A 259-amino-acid chain; its full sequence is 5'-nucleotidase SurE (259 aa).

Residues Asp-8, Asp-9, Ser-40, and Asn-92 each coordinate a divalent metal cation.

Belongs to the SurE nucleotidase family. A divalent metal cation serves as cofactor.

The protein resides in the cytoplasm. The enzyme catalyses a ribonucleoside 5'-phosphate + H2O = a ribonucleoside + phosphate. Functionally, nucleotidase that shows phosphatase activity on nucleoside 5'-monophosphates. This Xanthomonas campestris pv. campestris (strain B100) protein is 5'-nucleotidase SurE.